We begin with the raw amino-acid sequence, 594 residues long: MNFNVWNIKEMLSIPSGSGNKKSSNWNNNQNDYSSLSDSQFLFGSQFCPENSETLSAPLDFGAHLRHSKQSQQNYLEGEPSIFTKYQTKPQLFGGDIKDGGLFPPPLSVGKSKGLLEQFEEKKKRAKDKCDSETLYNFVSNVRESILRLQTSVEKSEDHLSSRSQSILDSLETVAKTLQETIQAQNDLVFEAVQDKGNMEQAILEMKKRFEARQGEFIEMKSNLKHLEVLVAQQSQEFQQLCEQLGQLNVPSVLAELKRLISVPPVKDSASQTSPPLAQSLNLTRQEKYTSEKPVLWQAQALPAAWNPGMGSLQPGEFDVWGEGAKNDDLQEEAALPAFGSHERNRHVKDKVVQTNCKNWAVTKTGAKNHGSSVPGHKIPSDRDLVSQGASQLTSLEINFSTSIKNACQKYQAQSMFLCDPREHLVIKQKDGTVEMRGKDKKQQPRKAHRAHRGRLIASKQKQIPIQTCKFNSKYQSPQPAISVPQSPFLGQQEPRAQPLHLQCPRSPRKPVCPILGGTVMPNKTVRAVQGRLLQLSRCSSQDNWLLSSSSQGDHQMSWFSDLNLGCSETPLCKEAGKNLLYDLGFDSSDDDGF.

Coiled-coil stretches lie at residues 109–135, 165–189, and 219–245; these read VGKSKGLLEQFEEKKKRAKDKCDSETL, QSILDSLETVAKTLQETIQAQNDLV, and EMKSNLKHLEVLVAQQSQEFQQLCEQL. Over residues 434–443 the composition is skewed to basic and acidic residues; that stretch reads VEMRGKDKKQ. A disordered region spans residues 434-454; sequence VEMRGKDKKQQPRKAHRAHRG. Residues 444–454 show a composition bias toward basic residues; the sequence is QPRKAHRAHRG. Residues S588 and S589 each carry the phosphoserine modification.

In terms of assembly, part of the MCD recombinosome complex, at least composed of IHO1, REC114 and MEI4. Interacts with REC114. Interacts with MEI4. Interacts with HORMAD1. Interacts with ANKRD31.

The protein resides in the chromosome. Required for DNA double-strand breaks (DSBs) formation in unsynapsed regions during meiotic recombination. Probably acts by forming a complex with MEI4 and REC114, which activates DSBs formation in unsynapsed regions, an essential step to ensure completion of synapsis. Not required for HORMAD1 functions in pairing-independent synaptonemal complex formation, ATR recruitment to unsynapsed axes, meiotic silencing of unsynapsed chromatin (MSUC) or meiotic surveillance. This Homo sapiens (Human) protein is Interactor of HORMAD1 protein 1.